We begin with the raw amino-acid sequence, 347 residues long: uncharacterized protein (347 aa).

Positions 207, 218, 279, 312, and 326 each coordinate Mn(2+).

This sequence belongs to the peptidase M24B family. The cofactor is Mn(2+).

This is an uncharacterized protein from Methanocaldococcus jannaschii (strain ATCC 43067 / DSM 2661 / JAL-1 / JCM 10045 / NBRC 100440) (Methanococcus jannaschii).